The following is a 101-amino-acid chain: NADH-quinone oxidoreductase subunit K (101 aa).

3 consecutive transmembrane segments (helical) span residues 4–24, 29–49, and 61–81; these read LAHY…GIFL, IIII…NFVA, and IFVF…LAIL.

It belongs to the complex I subunit 4L family. NDH-1 is composed of 14 different subunits. Subunits NuoA, H, J, K, L, M, N constitute the membrane sector of the complex.

The protein localises to the cell inner membrane. The catalysed reaction is a quinone + NADH + 5 H(+)(in) = a quinol + NAD(+) + 4 H(+)(out). Its function is as follows. NDH-1 shuttles electrons from NADH, via FMN and iron-sulfur (Fe-S) centers, to quinones in the respiratory chain. The immediate electron acceptor for the enzyme in this species is believed to be ubiquinone. Couples the redox reaction to proton translocation (for every two electrons transferred, four hydrogen ions are translocated across the cytoplasmic membrane), and thus conserves the redox energy in a proton gradient. The sequence is that of NADH-quinone oxidoreductase subunit K from Burkholderia ambifaria (strain MC40-6).